A 520-amino-acid chain; its full sequence is F-box/LRR-repeat protein At3g59200 (520 aa).

Residues 6–54 (RDRISSLPNPVVSHILSFLPTKEAASTSVLSKKWRYLFAYVTNLDFDDS) form the F-box domain. 3 LRR repeats span residues 170–197 (CVDV…VLMN), 219–244 (FCEE…EYSD), and 340–365 (NSEI…VLKR).

This chain is F-box/LRR-repeat protein At3g59200, found in Arabidopsis thaliana (Mouse-ear cress).